The primary structure comprises 187 residues: Putative lipoprotein LppJ (187 aa).

An N-terminal signal peptide occupies residues 1–28 (MPHSTADRRLRLTRQALLAAAVVPLLAG). Cysteine 29 carries the N-palmitoyl cysteine lipid modification. Residue cysteine 29 is the site of S-diacylglycerol cysteine attachment.

The protein localises to the cell membrane. This Mycobacterium tuberculosis (strain CDC 1551 / Oshkosh) protein is Putative lipoprotein LppJ (lppJ).